A 243-amino-acid polypeptide reads, in one-letter code: Protein Thf1 (243 aa).

Positions 180-224 (SKARVEKDLNLYKSNLEKMAQAVELTEQILESERRKREQNESAKL) form a coiled coil. The span at 210–220 (ESERRKREQNE) shows a compositional bias: basic and acidic residues. The tract at residues 210-243 (ESERRKREQNESAKLNTGSSEQMSQGVEACSNIS) is disordered. Over residues 221–243 (SAKLNTGSSEQMSQGVEACSNIS) the composition is skewed to polar residues.

Belongs to the THF1 family.

Its function is as follows. May be involved in photosynthetic membrane biogenesis. This is Protein Thf1 from Prochlorococcus marinus (strain MIT 9313).